We begin with the raw amino-acid sequence, 216 residues long: Peroxiredoxin (216 aa).

A Thioredoxin domain is found at V2–I158. Residue C46 is the Cysteine sulfenic acid (-SOH) intermediate of the active site. A substrate-binding site is contributed by R121. An intrachain disulfide couples C205 to C211.

The protein belongs to the peroxiredoxin family. Prx6 subfamily. Homodecamer. Pentamer of dimers that assemble into a ring structure.

It localises to the cytoplasm. The catalysed reaction is a hydroperoxide + [thioredoxin]-dithiol = an alcohol + [thioredoxin]-disulfide + H2O. Its function is as follows. Thiol-specific peroxidase that catalyzes the reduction of hydrogen peroxide and organic hydroperoxides to water and alcohols, respectively. Plays a role in cell protection against oxidative stress by detoxifying peroxides. This Pyrococcus abyssi (strain GE5 / Orsay) protein is Peroxiredoxin.